Reading from the N-terminus, the 318-residue chain is Thymidylate synthase (318 aa).

Residues Arg-26 and 181-182 contribute to the dUMP site; that span reads RR. The active-site Nucleophile is Cys-201. DUMP-binding positions include 221-224, Asn-232, and 262-264; these read RSAD and HIY. Residue Asp-224 participates in (6R)-5,10-methylene-5,6,7,8-tetrahydrofolate binding. Ala-317 provides a ligand contact to (6R)-5,10-methylene-5,6,7,8-tetrahydrofolate.

Belongs to the thymidylate synthase family. Bacterial-type ThyA subfamily. Homodimer.

It localises to the cytoplasm. It carries out the reaction dUMP + (6R)-5,10-methylene-5,6,7,8-tetrahydrofolate = 7,8-dihydrofolate + dTMP. The protein operates within pyrimidine metabolism; dTTP biosynthesis. Functionally, catalyzes the reductive methylation of 2'-deoxyuridine-5'-monophosphate (dUMP) to 2'-deoxythymidine-5'-monophosphate (dTMP) while utilizing 5,10-methylenetetrahydrofolate (mTHF) as the methyl donor and reductant in the reaction, yielding dihydrofolate (DHF) as a by-product. This enzymatic reaction provides an intracellular de novo source of dTMP, an essential precursor for DNA biosynthesis. In Staphylococcus haemolyticus (strain JCSC1435), this protein is Thymidylate synthase.